Reading from the N-terminus, the 211-residue chain is Uracil phosphoribosyltransferase (211 aa).

Residues Arg-81, Arg-106, and 133-141 each bind 5-phospho-alpha-D-ribose 1-diphosphate; that span reads DPMLATGNS. Uracil is bound by residues Ile-196 and 201–203; that span reads GDA. Asp-202 is a 5-phospho-alpha-D-ribose 1-diphosphate binding site.

It belongs to the UPRTase family. The cofactor is Mg(2+).

It carries out the reaction UMP + diphosphate = 5-phospho-alpha-D-ribose 1-diphosphate + uracil. Its pathway is pyrimidine metabolism; UMP biosynthesis via salvage pathway; UMP from uracil: step 1/1. Its activity is regulated as follows. Allosterically activated by GTP. Catalyzes the conversion of uracil and 5-phospho-alpha-D-ribose 1-diphosphate (PRPP) to UMP and diphosphate. This chain is Uracil phosphoribosyltransferase, found in Myxococcus xanthus (strain DK1622).